The following is a 402-amino-acid chain: Endoplasmic reticulum junction formation protein lunapark-B (402 aa).

Residues 1–45 (MGAIISRWKTKPSTVELLESLDKDIKDLEEFRAKNQRLLKLWVGR) are Cytoplasmic-facing. The chain crosses the membrane as a helical span at residues 46-66 (LLFYSSALYLLTCLCVYYLYF). At 67-77 (PQQWGARLITA) the chain is on the lumenal side. The chain crosses the membrane as a helical span at residues 78–98 (LPLLAFPALVLLLRKMLIFLF). The Cytoplasmic portion of the chain corresponds to 99 to 402 (SKRTERNNDK…EEQKKEDESN (304 aa)). A coiled-coil region spans residues 100–128 (KRTERNNDKLEDLKTQKRKILEEVMETET). The interval 142 to 240 (ESKKKAEAEA…PGPGSGMRPP (99 aa)) is disordered. Residues 205-222 (SASTPAGASQAETPQQMM) show a composition bias toward polar residues. Residues 276-301 (CQQCFSHNGMALKEEFEFVAFRCAYC) form a C4-type; plays a role in ER morphology zinc finger. A disordered region spans residues 311-402 (RPQAPRLPEF…EEQKKEDESN (92 aa)). A compositionally biased stretch (basic and acidic residues) spans 321–330 (SFERRLRSES). The segment covering 341 to 352 (TPEDSDAPEDDM) has biased composition (acidic residues). Basic and acidic residues predominate over residues 385-402 (PHAEAEALEEQKKEDESN).

Belongs to the lunapark family. Homodimer; homodimerization requires the C4-type zinc finger motif and decreases during mitosis in a phosphorylation-dependent manner. Phosphorylated. Phosphorylation occurs during interphase. Phosphorylation also occurs during mitosis; these phosphorylations reduce both its homodimerization and the ER three-way tubular junction formation.

It localises to the endoplasmic reticulum membrane. Endoplasmic reticulum (ER)-shaping membrane protein that plays a role in determining ER morphology. Involved in the stabilization of nascent three-way ER tubular junctions within the ER network. May also play a role as a curvature-stabilizing protein within three-way ER tubular junction network. The protein is Endoplasmic reticulum junction formation protein lunapark-B (lnpkb) of Danio rerio (Zebrafish).